Consider the following 303-residue polypeptide: Propanal dehydrogenase (CoA-propanoylating) (303 aa).

An NAD(+)-binding site is contributed by 12–15 (SGNI). Cys-127 (acyl-thioester intermediate) is an active-site residue. Residues 158-166 (SAGPGTRAN) and Asn-277 each bind NAD(+).

Belongs to the acetaldehyde dehydrogenase family. Monomer. Forms a heterotetramer composed of two aldolase (HsaF) and two dehydrogenase (HsaG) subunits.

It catalyses the reaction propanal + NAD(+) + CoA = propanoyl-CoA + NADH + H(+). The catalysed reaction is acetaldehyde + NAD(+) + CoA = acetyl-CoA + NADH + H(+). Functionally, involved in cholesterol degradation. Catalyzes the conversion of propanal to propanoyl-CoA, using NAD(+) and coenzyme A. This chain is Propanal dehydrogenase (CoA-propanoylating), found in Mycobacterium bovis (strain ATCC BAA-935 / AF2122/97).